The chain runs to 39 residues: ORF8a protein (39 aa).

Residues 1-15 (MKLLIVLTCISLCSC) form the signal peptide. Positions 16 to 39 (ICTVVQRCASNKPHVLEDPCKVQH) constitute an SARS ORF8 Ig-like domain.

The sequence is that of ORF8a protein from Homo sapiens (Human).